Consider the following 365-residue polypeptide: Nicotinate N-methyltransferase 1 (365 aa).

Position 232 (D232) interacts with S-adenosyl-L-methionine.

Belongs to the class I-like SAM-binding methyltransferase superfamily. Cation-independent O-methyltransferase family.

The enzyme catalyses nicotinate + S-adenosyl-L-methionine = N-methylnicotinate + S-adenosyl-L-homocysteine. Involved in nicotinate detoxification in planta. Catalyzes the conversion of nicotinate to N-methylnicotinate, which is a detoxified form of endogenous nicotinate in planta. This Oryza sativa subsp. japonica (Rice) protein is Nicotinate N-methyltransferase 1.